The primary structure comprises 430 residues: Adenylosuccinate synthetase (430 aa).

GTP contacts are provided by residues 12–18 and 40–42; these read GDEGKGK and GHT. Asp-13 acts as the Proton acceptor in catalysis. Positions 13 and 40 each coordinate Mg(2+). Residues 13–16, 38–41, Thr-130, Arg-144, Gln-224, and Thr-239 contribute to the IMP site; these read DEGK and NAGH. The active-site Proton donor is His-41. A disordered region spans residues 277-297; sequence PFPTEQDNETGRKIGERGREF. Residues 285–296 show a composition bias toward basic and acidic residues; it reads ETGRKIGERGRE. Substrate is bound at residue 299–305; the sequence is TNTGRPR. IMP is bound at residue Arg-303. GTP-binding positions include Arg-305, 331–333, and 413–415; these read KLD and STS.

This sequence belongs to the adenylosuccinate synthetase family. As to quaternary structure, homodimer. Mg(2+) serves as cofactor.

The protein localises to the cytoplasm. The enzyme catalyses IMP + L-aspartate + GTP = N(6)-(1,2-dicarboxyethyl)-AMP + GDP + phosphate + 2 H(+). The protein operates within purine metabolism; AMP biosynthesis via de novo pathway; AMP from IMP: step 1/2. Plays an important role in the de novo pathway of purine nucleotide biosynthesis. Catalyzes the first committed step in the biosynthesis of AMP from IMP. The protein is Adenylosuccinate synthetase of Bradyrhizobium sp. (strain ORS 278).